Here is a 260-residue protein sequence, read N- to C-terminus: Putative ABC transporter ATP-binding protein (260 aa).

The 240-residue stretch at 4–243 (ISMKNVTLKK…QVLENFYESP (240 aa)) folds into the ABC transporter domain. Residue 36 to 43 (GLNGSGKT) coordinates ATP.

The protein belongs to the ABC transporter superfamily.

The polypeptide is Putative ABC transporter ATP-binding protein (abcX) (Streptococcus mutans serotype c (strain ATCC 700610 / UA159)).